A 107-amino-acid chain; its full sequence is MINGDIILFALMVVTGVNLARYLTALRSLIYIMREAHPLLYQQVDGNGFFTTHGNVTKQVRLYHYLKSKEYHHHHDEVFTGKCDRVRELFVLSVSLTGVTLLAAFLL.

2 consecutive transmembrane segments (helical) span residues 6–26 and 86–106; these read IILFALMVVTGVNLARYLTAL and VRELFVLSVSLTGVTLLAAFL.

This sequence belongs to the universal stress protein B family.

The protein resides in the cell inner membrane. This chain is Universal stress protein B homolog, found in Vibrio vulnificus (strain CMCP6).